Consider the following 202-residue polypeptide: Glycerol-3-phosphate acyltransferase (202 aa).

4 helical membrane passes run 2–22 (ANLL…AVVV), 82–102 (DTGL…PVFH), 119–139 (AIDP…AFFF), and 158–178 (VLMN…VLLI).

It belongs to the PlsY family. Probably interacts with PlsX.

It localises to the cell inner membrane. The catalysed reaction is an acyl phosphate + sn-glycerol 3-phosphate = a 1-acyl-sn-glycero-3-phosphate + phosphate. It functions in the pathway lipid metabolism; phospholipid metabolism. In terms of biological role, catalyzes the transfer of an acyl group from acyl-phosphate (acyl-PO(4)) to glycerol-3-phosphate (G3P) to form lysophosphatidic acid (LPA). This enzyme utilizes acyl-phosphate as fatty acyl donor, but not acyl-CoA or acyl-ACP. The chain is Glycerol-3-phosphate acyltransferase from Cupriavidus taiwanensis (strain DSM 17343 / BCRC 17206 / CCUG 44338 / CIP 107171 / LMG 19424 / R1) (Ralstonia taiwanensis (strain LMG 19424)).